The following is a 525-amino-acid chain: GMP synthase [glutamine-hydrolyzing] (525 aa).

The Glutamine amidotransferase type-1 domain occupies 11-200 (PVLVVDFGAQ…LTEIAGLEQN (190 aa)). The Nucleophile role is filled by C88. Residues H174 and E176 contribute to the active site. The GMPS ATP-PPase domain occupies 201-399 (WTAANIAEEL…LGLPEEIVNR (199 aa)). 229–235 (SGGVDSA) is a binding site for ATP.

As to quaternary structure, homodimer.

It catalyses the reaction XMP + L-glutamine + ATP + H2O = GMP + L-glutamate + AMP + diphosphate + 2 H(+). Its pathway is purine metabolism; GMP biosynthesis; GMP from XMP (L-Gln route): step 1/1. Functionally, catalyzes the synthesis of GMP from XMP. The protein is GMP synthase [glutamine-hydrolyzing] of Corynebacterium diphtheriae (strain ATCC 700971 / NCTC 13129 / Biotype gravis).